The sequence spans 506 residues: Carboxypeptidase Y homolog ARB_06361 (506 aa).

Positions 1–15 (MHVAILLAIISLARA) are cleaved as a signal peptide. An N-linked (GlcNAc...) asparagine glycan is attached at N108. S179 is a catalytic residue. Residues N280, N316, and N349 are each glycosylated (N-linked (GlcNAc...) asparagine). The active site involves D427. N-linked (GlcNAc...) asparagine glycosylation occurs at N441. H485 is a catalytic residue.

This sequence belongs to the peptidase S10 family.

Its subcellular location is the secreted. The enzyme catalyses Release of a C-terminal amino acid with broad specificity.. In terms of biological role, involved in degradation of small peptides. The polypeptide is Carboxypeptidase Y homolog ARB_06361 (Arthroderma benhamiae (strain ATCC MYA-4681 / CBS 112371) (Trichophyton mentagrophytes)).